Reading from the N-terminus, the 946-residue chain is Atos homolog protein A (946 aa).

Residues 24 to 32 (ALLITEGRT) are transactivation domain 1 (TAD1). The segment covering 34-43 (EHSVKGRTEG) has biased composition (basic and acidic residues). Disordered stretches follow at residues 34 to 58 (EHSV…APNK), 246 to 271 (SVTQ…FTKP), 484 to 524 (FQSS…TGNQ), and 547 to 567 (SCTD…SQKV). 2 stretches are compositionally biased toward polar residues: residues 247 to 267 (VTQP…SQHA) and 484 to 500 (FQSS…NENI). Composition is skewed to basic and acidic residues over residues 503–517 (LPEK…HGEI) and 547–560 (SCTD…KDNP). Residues 749-806 (LLGNFEESVLNYRFEPLGVVEGFTAEVGASGIFCPTHMTLPVKVSFYSVSDDNAPSPY) form a required for macropage invasion region. The tract at residues 833–841 (FNPNKTVVK) is transactivation domain 2 (TAD2).

This sequence belongs to the ATOS family.

It is found in the nucleus. In terms of biological role, transcription regulator that syncronizes transcriptional and translational programs to promote macrophage invasion of tissues. The protein is Atos homolog protein A (atosa) of Xenopus tropicalis (Western clawed frog).